A 164-amino-acid chain; its full sequence is ATP synthase subunit b (164 aa).

Residues 6–26 (GELVGNFILVTGSVIVLLLLI) traverse the membrane as a helical segment.

Belongs to the ATPase B chain family. As to quaternary structure, F-type ATPases have 2 components, F(1) - the catalytic core - and F(0) - the membrane proton channel. F(1) has five subunits: alpha(3), beta(3), gamma(1), delta(1), epsilon(1). F(0) has three main subunits: a(1), b(2) and c(10-14). The alpha and beta chains form an alternating ring which encloses part of the gamma chain. F(1) is attached to F(0) by a central stalk formed by the gamma and epsilon chains, while a peripheral stalk is formed by the delta and b chains.

It is found in the cell membrane. F(1)F(0) ATP synthase produces ATP from ADP in the presence of a proton or sodium gradient. F-type ATPases consist of two structural domains, F(1) containing the extramembraneous catalytic core and F(0) containing the membrane proton channel, linked together by a central stalk and a peripheral stalk. During catalysis, ATP synthesis in the catalytic domain of F(1) is coupled via a rotary mechanism of the central stalk subunits to proton translocation. Functionally, component of the F(0) channel, it forms part of the peripheral stalk, linking F(1) to F(0). This chain is ATP synthase subunit b, found in Streptococcus pyogenes serotype M12 (strain MGAS2096).